The chain runs to 436 residues: Trigger factor (436 aa).

The PPIase FKBP-type domain occupies 161–246 (DDQLNIDFVG…VNSVAEPKLP (86 aa)).

It belongs to the FKBP-type PPIase family. Tig subfamily.

The protein resides in the cytoplasm. It catalyses the reaction [protein]-peptidylproline (omega=180) = [protein]-peptidylproline (omega=0). Functionally, involved in protein export. Acts as a chaperone by maintaining the newly synthesized protein in an open conformation. Functions as a peptidyl-prolyl cis-trans isomerase. This Pseudomonas paraeruginosa (strain DSM 24068 / PA7) (Pseudomonas aeruginosa (strain PA7)) protein is Trigger factor.